Here is a 144-residue protein sequence, read N- to C-terminus: Cytochrome c-type biogenesis protein CcmE (144 aa).

Residues 1 to 7 lie on the Cytoplasmic side of the membrane; that stretch reads MKPRHKR. Residues 8-28 form a helical; Signal-anchor for type II membrane protein membrane-spanning segment; that stretch reads ALMIVAALAVIGIAALLILNA. Over 29-144 the chain is Extracellular; sequence LNSNIALYVT…EQAQKNGSAK (116 aa). Heme-binding residues include H121 and Y125.

The protein belongs to the CcmE/CycJ family.

Its subcellular location is the cell membrane. Heme chaperone required for the biogenesis of c-type cytochromes. Transiently binds heme delivered by CcmC and transfers the heme to apo-cytochromes in a process facilitated by CcmF and CcmH. This is Cytochrome c-type biogenesis protein CcmE from Polynucleobacter asymbioticus (strain DSM 18221 / CIP 109841 / QLW-P1DMWA-1) (Polynucleobacter necessarius subsp. asymbioticus).